A 487-amino-acid polypeptide reads, in one-letter code: Cyclic AMP-dependent transcription factor ATF-2 (487 aa).

The segment at 7–31 adopts a C2H2-type zinc-finger fold; sequence FLCTAPGCGQRFTNEDHLAVHKHKH. Position 34 is a phosphothreonine; by PKC/PRKCH (Thr-34). The residue at position 44 (Ser-44) is a Phosphoserine. Thr-51 is modified (phosphothreonine; by MAPK11 and MAPK14). At Thr-53 the chain carries Phosphothreonine; by MAPK1, MAPK3, MAPK11, MAPK12, MAPK14 and PLK3. Thr-55 is modified (phosphothreonine; by VRK1). A phosphoserine mark is found at Ser-72 and Ser-94. Residue Thr-98 is modified to Phosphothreonine. Ser-103 carries the phosphoserine; by PKC/PRKCA and PKC/PRKCB modification. Disordered stretches follow at residues 106–137 and 241–355; these read EEPS…PLAQ and PGIP…RQKR. A Phosphoserine modification is found at Ser-118. Over residues 264–275 the composition is skewed to polar residues; sequence LTQQHPPVTNGD. Positions 278-281 are essential for its histone acetyltransferase activity; sequence KGHG. Residues 300–316 are compositionally biased toward low complexity; that stretch reads PATSTTETPASPAHTTP. Ser-310 is modified (phosphoserine). Ser-322 carries the post-translational modification Phosphoserine; by PKC/PRKCA and PKC/PRKCB. Basic and acidic residues predominate over residues 328-345; that stretch reads AANEDPDEKRRKFLERNR. A bZIP domain is found at 334-397; it reads DEKRRKFLER…AQLKQLLLAH (64 aa). Residues 336-356 form a basic motif region; sequence KRRKFLERNRAAASRCRQKRK. Lys-339 bears the N6-acetyllysine mark. At Ser-349 the chain carries Phosphoserine; by PKC/PRKCA and PKC/PRKCB. N6-acetyllysine is present on Lys-356. The segment at 362 to 390 is leucine-zipper; that stretch reads LEKKAEDLSSLNGQLQSEVTLLRNEVAQL. Residues 387 to 396 carry the Nuclear export signal motif; sequence VAQLKQLLLA. The disordered stretch occupies residues 407-453; the sequence is KKSGYHTADKDDSSEDLSVPSSPHTEAIQHSSVSTSNGVSSTSKAEA. Ser-424 and Ser-428 each carry phosphoserine. Over residues 425–436 the composition is skewed to polar residues; the sequence is VPSSPHTEAIQH. Residues 437–449 show a composition bias toward low complexity; it reads SSVSTSNGVSSTS. Residues Ser-472 and Ser-480 each carry the phosphoserine; by ATM modification.

The protein belongs to the bZIP family. ATF subfamily. Binds DNA as a dimer and can form a homodimer in the absence of DNA. Can form a heterodimer with JUN. Heterodimerization is essential for its transcriptional activity. Interacts with SMAD3 and SMAD4. Interacts with the HK1/VDAC1 complex. Interacts with NBN, MRE11, XPO1, KAT5 and CUL3. Binds through its N-terminal region to UTF1 which acts as a coactivator of ATF2 transcriptional activity. Post-translationally, phosphorylation of Thr-51 by MAPK14 and MAPK11, and at Thr-53 by MAPK1/ERK2, MAPK3/ERK1, MAPK11, MAPK12 and MAPK14 in response to external stimulus like insulin causes increased transcriptional activity. Phosphorylated by PLK3 following hyperosmotic stress. Also phosphorylated and activated by JNK and CaMK4. ATM-mediated phosphorylation at Ser-472 and Ser-480 stimulates its function in DNA damage response. Phosphorylation at Ser-44, Thr-55 and Ser-103 activates its transcriptional activity. Phosphorylation at Thr-51 or Thr-53 enhances acetylation of histones H2B and H4.

It localises to the nucleus. Its subcellular location is the cytoplasm. The protein localises to the mitochondrion outer membrane. Its function is as follows. Transcriptional activator which regulates the transcription of various genes, including those involved in anti-apoptosis, cell growth, and DNA damage response. Dependent on its binding partner, binds to CRE (cAMP response element) consensus sequences (5'-TGACGTCA-3') or to AP-1 (activator protein 1) consensus sequences (5'-TGACTCA-3'). In the nucleus, contributes to global transcription and the DNA damage response, in addition to specific transcriptional activities that are related to cell development, proliferation and death. In the cytoplasm, interacts with and perturbs HK1- and VDAC1-containing complexes at the mitochondrial outer membrane, thereby impairing mitochondrial membrane potential, inducing mitochondrial leakage and promoting cell death. The phosphorylated form (mediated by ATM) plays a role in the DNA damage response and is involved in the ionizing radiation (IR)-induced S phase checkpoint control and in the recruitment of the MRN complex into the IR-induced foci (IRIF). Exhibits histone acetyltransferase (HAT) activity which specifically acetylates histones H2B and H4 in vitro. In concert with CUL3 and RBX1, promotes the degradation of KAT5 thereby attenuating its ability to acetylate and activate ATM. Can elicit oncogenic or tumor suppressor activities depending on the tissue or cell type. The polypeptide is Cyclic AMP-dependent transcription factor ATF-2 (Atf2) (Mus musculus (Mouse)).